The primary structure comprises 352 residues: MESSLQKLKFQDIDINLIPTAKWTTKLQYILYTWCQSILHVAMFFSDIYTCIKLLAFNTWSNNIIQPFLEFRISKWLFSGCILCSSLILIWELVIGLRVYRKKEITSNYMNGISRLINCLFNFKKYQIFELIVLTDEKKFSKWLFFSYFEISGCLRLLFGDSPRQIINGLTLWSVLLTVSNETSSGTHSTQSLGNLDDLNGIINKIKHIAKTNYEESVILSFMLFSFIIWVILISKLILSIIIFIIFIRPRFLSSKRKVKGYELKLRKYVSKVIDENLSRTVYELGILIDDEEEGTICGDNKTQKKFDYDSPDYGDESTIPSYYCYSDVETYERVYTPIKAYFPQKYKHKYI.

The Extracellular segment spans residues 1 to 36; it reads MESSLQKLKFQDIDINLIPTAKWTTKLQYILYTWCQ. A helical transmembrane segment spans residues 37-57; sequence SILHVAMFFSDIYTCIKLLAF. Topologically, residues 58–76 are cytoplasmic; the sequence is NTWSNNIIQPFLEFRISKW. A helical membrane pass occupies residues 77–97; it reads LFSGCILCSSLILIWELVIGL. Topologically, residues 98–227 are extracellular; that stretch reads RVYRKKEITS…VILSFMLFSF (130 aa). The chain crosses the membrane as a helical span at residues 228–248; the sequence is IIWVILISKLILSIIIFIIFI. At 249–352 the chain is on the cytoplasmic side; the sequence is RPRFLSSKRK…FPQKYKHKYI (104 aa).

Belongs to the KCH1 low affinity K(+) transporter family.

It is found in the cell membrane. It localises to the bud tip. The protein resides in the vacuole lumen. It catalyses the reaction K(+)(in) = K(+)(out). In terms of biological role, low affinity potassium transporter that, with KCH1, participates in high-affinity Ca(2+) influx system (HACS) activation during the response to mating pheromone. Directly promotes K(+) influx and HACS may electrochemically respond to this K(+) influx. KCH1 and PRM6/KCH2 act at the apex of the calcium signaling pathway that is used for survival during prolonged exposures to mating pheromones. This chain is Pheromone-regulated membrane protein 6, found in Saccharomyces cerevisiae (strain ATCC 204508 / S288c) (Baker's yeast).